The following is a 546-amino-acid chain: Probable protein kinase UbiB (546 aa).

A Protein kinase domain is found at 124–502; the sequence is DFDIQPLASA…HVRQSQSRYL (379 aa). Residues 130–138 and lysine 153 contribute to the ATP site; that span reads LASASIAQV. Aspartate 288 (proton acceptor) is an active-site residue. A run of 2 helical transmembrane segments spans residues 501 to 521 and 522 to 542; these read YLLG…VNRP and EWGL…LVGW.

This sequence belongs to the ABC1 family. UbiB subfamily.

The protein localises to the cell inner membrane. The protein operates within cofactor biosynthesis; ubiquinone biosynthesis [regulation]. Its function is as follows. Is probably a protein kinase regulator of UbiI activity which is involved in aerobic coenzyme Q (ubiquinone) biosynthesis. The sequence is that of Probable protein kinase UbiB from Salmonella agona (strain SL483).